The chain runs to 270 residues: Tetraspanin-2 (270 aa).

Topologically, residues 1–8 (MALANNLT) are cytoplasmic. The chain crosses the membrane as a helical span at residues 9 to 29 (AILNLLALLCSIPITASGIWL). The Extracellular segment spans residues 30 to 42 (ASKPDNECVNLLR). A helical membrane pass occupies residues 43-63 (WPVVVLGVLILVVSATGFIGA). Residues 64-74 (YKYKETLLAVY) lie on the Cytoplasmic side of the membrane. A helical membrane pass occupies residues 75-95 (LCCMAILIGLLLVVLIFAFVV). Residues 96 to 232 (TRPDGSYRVP…NLRKEWRKAN (137 aa)) lie on the Extracellular side of the membrane. The chain crosses the membrane as a helical span at residues 233 to 253 (LILIITVVVLIWVYVIACSAF). Over 254-270 (RNAQTEDLFRKYKQGWV) the chain is Cytoplasmic.

This sequence belongs to the tetraspanin (TM4SF) family.

It is found in the membrane. Functionally, may be involved in the regulation of cell differentiation. The polypeptide is Tetraspanin-2 (TET2) (Arabidopsis thaliana (Mouse-ear cress)).